The following is a 344-amino-acid chain: Short chain dehydrogenase/reductase mfmJ (344 aa).

NADP(+)-binding residues include L51, K76, D99, N126, Y213, and K217. Y213 (proton donor) is an active-site residue. The active-site Lowers pKa of active site Tyr is the K217.

The protein belongs to the short-chain dehydrogenases/reductases (SDR) family.

Functionally, short chain dehydrogenase/reductase; part of the gene cluster that mediates the biosynthesis of the phthalide-terpenoid hybrid 11'-O-desmethylfendlerol. MfmJ seems not to be involved directly in the biosynthesis of 11'-O-desmethylfendlerol and its role has still to be determined. The biosynthesis of 11'-O-desmethylfendlerol begins with the NR-PKS mfmB that forms 3,5-dimethylorsellinic acid (DMOA), which is then transformed into the phthalide 5,7-dihydroxy-4-(hydroxymethyl)-6-methylphthalide by the cytochrome P450 monooxygenase mfmA and the hydrolase mfmC. Subsequently, the methyltransferase mfmE catalyzes 7-O-methylation to yield 5-hydroxy-4-(hydroxymethyl)-7-methoxy-6-methylphthalide, which undergoes C-3 hydroxylation by the cytochrome P450 monooxygenase mfmF. The resultant cyclopolic acid (2,5-dihydroxy-4-(hydroxymethyl)-7-methoxy-6-methylphthalide) is then farnesylated by the DMATS-type prenyltransferase mfmD to afford 5-O-farnesylcyclopolic acid. Finally, the Pyr4-family terpene cyclase mfmH cyclizes the farnesyl moiety of 5-O-farnesylcyclopolic acid into a drimane-like structure, thus completing the biosynthesis of 11'-O-desmethylfendlerol. This chain is Short chain dehydrogenase/reductase mfmJ, found in Annulohypoxylon moriforme (Filamentous fungus).